Consider the following 193-residue polypeptide: Probable nicotinate-nucleotide adenylyltransferase (193 aa).

Belongs to the NadD family.

It catalyses the reaction nicotinate beta-D-ribonucleotide + ATP + H(+) = deamido-NAD(+) + diphosphate. Its pathway is cofactor biosynthesis; NAD(+) biosynthesis; deamido-NAD(+) from nicotinate D-ribonucleotide: step 1/1. Its function is as follows. Catalyzes the reversible adenylation of nicotinate mononucleotide (NaMN) to nicotinic acid adenine dinucleotide (NaAD). The sequence is that of Probable nicotinate-nucleotide adenylyltransferase from Fusobacterium nucleatum subsp. nucleatum (strain ATCC 25586 / DSM 15643 / BCRC 10681 / CIP 101130 / JCM 8532 / KCTC 2640 / LMG 13131 / VPI 4355).